The chain runs to 982 residues: Chromosome partition protein Smc (982 aa).

Position 33–40 (33–40) interacts with ATP; it reads PNGSGKSN. Coiled coils occupy residues 171 to 231, 280 to 310, and 337 to 377; these read RYTK…ELAV, SADMQSNELQKELQDIYQKINELEQRKVIID, and QTQL…QIEK. The 120-residue stretch at 416 to 535 folds into the SMC hinge domain; it reads TGILNTLGTF…AKDLNSAINL (120 aa). 2 coiled-coil regions span residues 575–718 and 753–822; these read SASL…SARE and VKLS…IASN.

The protein belongs to the SMC family. Homodimer.

It localises to the cytoplasm. Functionally, required for chromosome condensation and partitioning. In Mycoplasma genitalium (strain ATCC 33530 / DSM 19775 / NCTC 10195 / G37) (Mycoplasmoides genitalium), this protein is Chromosome partition protein Smc.